Here is a 678-residue protein sequence, read N- to C-terminus: Geranylgeranyl transferase type-2 subunit alpha 1 (678 aa).

PFTA repeat units lie at residues 40 to 74 (YTNEAIELSTKLLEINPEAYTAWNYRKLAVEDRLA), 86 to 120 (ILDEELRVVESALRQNFKSYGAWHHRKWVLSKGHS), 121 to 155 (SVGNELRLLEKFQKLDSRNFHAWNYRRFVVELTNR), 156 to 190 (SEQDELQYTDDMINNNFSNYSAWHNRSVLLSSLLA), and 201 to 235 (KIPEEYDFVHSAIFTEPDDQSGWFYHLWLLDQTLN). 5 LRR repeats span residues 510–532 (MNNLVCLRLNNLSLSRIASVEKL), 533–554 (LFVQMLDLSHNELHSTEGLEAM), 555–578 (QLLSCLNLSHNRIRSFSALDSLRH), 580–604 (KQLKVLDVSHNHIGKHSVDTTRYLC), and 638–663 (DLNLKQLDIAGNEIAGEEFSSFVLQV).

It belongs to the protein prenyltransferase subunit alpha family. Heterotrimer composed of the alpha subunit RGTA, the beta subunit RGTB and REP; within this trimer, RGTA and RGTB form the catalytic component, while REP mediates peptide substrate binding.

It catalyses the reaction geranylgeranyl diphosphate + L-cysteinyl-[protein] = S-geranylgeranyl-L-cysteinyl-[protein] + diphosphate. Its activity is regulated as follows. The enzymatic reaction requires the aid of the Rab escort protein REP. In terms of biological role, catalyzes the transfer of a geranylgeranyl moiety from geranylgeranyl diphosphate to both cysteines of Rab proteins with the C-terminal sequence -CCXX, CXXX, -XCCX and -XCXC, such as RABA1A, RABA2A, RABF2A and RABG2. In vitro, can prenylate PGGTI targets with the C-terminal Cys-aliphatic-aliphatic-X (CaaX) with leucine in the terminal position. Substrates with the C-terminal sequence -CSIL such as ARAC11/ROP1 or GG2/AGG2 are prenylated independently of REP and when the alpha subunit is associated with a beta subunit (RGTB1 or RGTB2). This is Geranylgeranyl transferase type-2 subunit alpha 1 from Arabidopsis thaliana (Mouse-ear cress).